Consider the following 129-residue polypeptide: Small ribosomal subunit protein uS12 (129 aa).

The interval 110–129 (RKQGRSRYGAHRKQVAATKK) is disordered.

Belongs to the universal ribosomal protein uS12 family. As to quaternary structure, part of the 30S ribosomal subunit. Contacts proteins S8 and S17. May interact with IF1 in the 30S initiation complex.

Functionally, with S4 and S5 plays an important role in translational accuracy. Its function is as follows. Interacts with and stabilizes bases of the 16S rRNA that are involved in tRNA selection in the A site and with the mRNA backbone. Located at the interface of the 30S and 50S subunits, it traverses the body of the 30S subunit contacting proteins on the other side and probably holding the rRNA structure together. The combined cluster of proteins S8, S12 and S17 appears to hold together the shoulder and platform of the 30S subunit. The polypeptide is Small ribosomal subunit protein uS12 (Rickettsia prowazekii (strain Madrid E)).